Reading from the N-terminus, the 432-residue chain is Amino-acid acetyltransferase (432 aa).

The N-acetyltransferase domain maps to 286 to 425 (ELVREAAIED…ASLYNFQRNS (140 aa)).

It belongs to the acetyltransferase family. ArgA subfamily.

It localises to the cytoplasm. It carries out the reaction L-glutamate + acetyl-CoA = N-acetyl-L-glutamate + CoA + H(+). Its pathway is amino-acid biosynthesis; L-arginine biosynthesis; N(2)-acetyl-L-ornithine from L-glutamate: step 1/4. The chain is Amino-acid acetyltransferase from Pseudomonas syringae pv. tomato (strain ATCC BAA-871 / DC3000).